Reading from the N-terminus, the 981-residue chain is Echinoderm microtubule-associated protein-like 4 (981 aa).

Position 1 is an N-acetylmethionine (M1). 2 disordered regions span residues 1-20 (MDGF…TSDV) and 57-205 (DHVA…PKLI). The interval 1-249 (MDGFAGSLDD…IPSDVDNYDD (249 aa)) is microtubule-binding. Phosphoserine is present on residues S7, S13, S16, and S61. A coiled-coil region spans residues 14 to 63 (AASTSDVQDRLSALESRVQQQEDEITVLKAALADVLRRLAISEDHVASVK). Phosphothreonine is present on T96. Positions 114-134 (GTEKKKEKPQGQREKKEESHS) are enriched in basic and acidic residues. At S134 the chain carries Phosphoserine; by NEK7. The span at 137–155 (QSPQIRASPSPQPSSQPLQ) shows a compositional bias: low complexity. S144 carries the phosphoserine; by NEK6 modification. Position 146 is a phosphoserine; by NEK7 (S146). S171 is subject to Phosphoserine. Residues 176-193 (SPAEKSHNSWENSDDSRN) are compositionally biased toward basic and acidic residues. S200 carries the phosphoserine modification. T201 carries the post-translational modification Phosphothreonine. Y226 is subject to Phosphotyrosine. Position 237 is a phosphothreonine (T237). WD repeat units lie at residues 259 to 297 (LKLE…LFNY), 301 to 348 (TQRH…VWDS), 356 to 396 (IIGL…VWDW), 403 to 438 (AEIK…FWTW), and 445 to 484 (RKQG…IWSK). At T490 the chain carries Phosphothreonine; by NEK6. WD repeat units follow at residues 500–538 (QISK…LWDH), 543–579 (EREI…LRGT), 582–621 (DGFQ…LWNS), 625–662 (RLEW…VLDA), 668–704 (VSIH…LYVV), 711–750 (YSRY…YWDI), 760–818 (RSDC…LFQY), and 825–864 (APSH…QWKL). A Phosphothreonine; by NEK6 and NEK7 modification is found at T609. Polar residues predominate over residues 881–893 (LTKAPVSSTESVI). Residues 881-981 (LTKAPVSSTE…EDQQDPSPSS (101 aa)) are disordered. Phosphoserine occurs at positions 891 and 895. 2 positions are modified to phosphothreonine: T897 and T899. At S903 the chain carries Phosphoserine. Residues 916–931 (ISSSPTLLENSLEQTV) show a composition bias toward polar residues. Over residues 937–946 (HSEEESEEGS) the composition is skewed to acidic residues. S978 is subject to Phosphoserine. The residue at position 981 (S981) is a Phosphoserine; by NEK6 and NEK7.

The protein belongs to the WD repeat EMAP family. Homotrimer; self-association is mediated by the N-terminal coiled coil. Interacts (via WD repeats) with NUDC. Interacts with alpha- and beta-tubulin during mitosis. Post-translationally, phosphorylated during mitosis. Phosphorylation at Ser-144 and Ser-146 promotes its dissociation from microtubules during mitosis which is required for efficient chromosome congression.

The protein resides in the cytoplasm. It is found in the cytoskeleton. The protein localises to the spindle. Its subcellular location is the microtubule organizing center. It localises to the midbody. In terms of biological role, essential for the formation and stability of microtubules (MTs). Required for the organization of the mitotic spindle and for the proper attachment of kinetochores to MTs. Promotes the recruitment of NUDC to the mitotic spindle for mitotic progression. This chain is Echinoderm microtubule-associated protein-like 4 (EML4), found in Homo sapiens (Human).